A 229-amino-acid polypeptide reads, in one-letter code: Isopentenyl-diphosphate delta-isomerase (229 aa).

Residue lysine 39 participates in substrate binding. Mg(2+)-binding residues include histidine 43 and histidine 54. The 151-residue stretch at leucine 52–leucine 202 folds into the Nudix hydrolase domain. Substrate contacts are provided by glutamine 72 and lysine 77. Residue cysteine 89 is part of the active site. Serine 90 lines the substrate pocket. Glutamate 152 and glutamate 154 together coordinate Mg(2+). Residue glutamate 154 is part of the active site.

It belongs to the IPP isomerase type 1 family. The cofactor is Mg(2+).

Its subcellular location is the cytoplasm. It localises to the nucleus. The catalysed reaction is isopentenyl diphosphate = dimethylallyl diphosphate. The protein operates within isoprenoid biosynthesis; dimethylallyl diphosphate biosynthesis; dimethylallyl diphosphate from isopentenyl diphosphate: step 1/1. Its function is as follows. Isopentenyl-diphosphate delta-isomerase; part of the second module of ergosterol biosynthesis pathway that includes the middle steps of the pathway. Idi1 catalyzes the 1,3-allylic rearrangement of isopentenyl (IPP) to its highly electrophilic allylic isomer, dimethylallyl diphosphate (DMAPP). The second module is carried out in the vacuole and involves the formation of farnesyl diphosphate, which is also an important intermediate in the biosynthesis of ubiquinone, dolichol, heme and prenylated proteins. Activity by the mevalonate kinase erg12 first converts mevalonate into 5-phosphomevalonate. 5-phosphomevalonate is then further converted to 5-diphosphomevalonate by the phosphomevalonate kinase erg8. The diphosphomevalonate decarboxylase mvd1 then produces isopentenyl diphosphate. The isopentenyl-diphosphate delta-isomerase idi1 then catalyzes the 1,3-allylic rearrangement of the homoallylic substrate isopentenyl (IPP) to its highly electrophilic allylic isomer, dimethylallyl diphosphate (DMAPP). Finally the farnesyl diphosphate synthase fps1 catalyzes the sequential condensation of isopentenyl pyrophosphate with dimethylallyl pyrophosphate, and then with the resultant geranylpyrophosphate to the ultimate product farnesyl pyrophosphate. This Schizosaccharomyces pombe (strain 972 / ATCC 24843) (Fission yeast) protein is Isopentenyl-diphosphate delta-isomerase.